The following is a 145-amino-acid chain: Protein SprT-like (145 aa).

A SprT-like domain is found at 4-140 (TNYVQEVSLA…VCGNCHGKLI (137 aa)). His64 provides a ligand contact to Zn(2+). Glu65 is a catalytic residue. A Zn(2+)-binding site is contributed by His68.

This sequence belongs to the SprT family. Zn(2+) is required as a cofactor.

Its subcellular location is the cytoplasm. This Streptococcus pyogenes serotype M6 (strain ATCC BAA-946 / MGAS10394) protein is Protein SprT-like.